Consider the following 261-residue polypeptide: Tryptophan synthase alpha chain (261 aa).

Catalysis depends on proton acceptor residues glutamate 47 and aspartate 58.

The protein belongs to the TrpA family. Tetramer of two alpha and two beta chains.

It catalyses the reaction (1S,2R)-1-C-(indol-3-yl)glycerol 3-phosphate + L-serine = D-glyceraldehyde 3-phosphate + L-tryptophan + H2O. Its pathway is amino-acid biosynthesis; L-tryptophan biosynthesis; L-tryptophan from chorismate: step 5/5. The alpha subunit is responsible for the aldol cleavage of indoleglycerol phosphate to indole and glyceraldehyde 3-phosphate. The sequence is that of Tryptophan synthase alpha chain from Neisseria gonorrhoeae (strain ATCC 700825 / FA 1090).